Reading from the N-terminus, the 733-residue chain is Catalase-peroxidase (733 aa).

A cross-link (tryptophyl-tyrosyl-methioninium (Trp-Tyr) (with M-245)) is located at residues 96–219 (WHSAGTYRTG…LAAVQMGLIY (124 aa)). Catalysis depends on H97, which acts as the Proton acceptor. Positions 219-245 (YVNPEGPNGNPDPLAAAKDIRETFARM) form a cross-link, tryptophyl-tyrosyl-methioninium (Tyr-Met) (with W-96). H260 provides a ligand contact to heme b.

This sequence belongs to the peroxidase family. Peroxidase/catalase subfamily. Homodimer or homotetramer. It depends on heme b as a cofactor. In terms of processing, formation of the three residue Trp-Tyr-Met cross-link is important for the catalase, but not the peroxidase activity of the enzyme.

It carries out the reaction H2O2 + AH2 = A + 2 H2O. It catalyses the reaction 2 H2O2 = O2 + 2 H2O. In terms of biological role, bifunctional enzyme with both catalase and broad-spectrum peroxidase activity. This is Catalase-peroxidase from Geobacter sp. (strain M21).